The chain runs to 385 residues: MKNNRTFLEKLLEGSEVEWKPLDEVANIVNNARKPVKSSLRVSGNIPYYGANNIQDYVEGYTHEGEFVLIAEDGSASLENYSIQWAVGKFWANNHVHVVNGKEKLNNRFLYHYLTNMNFIPFLAGKERAKLTKAKLQQIPIPIPPLSVQTEIVKILDALTALTSELTSELTSELTSELILRQKQYEYYREKLLNIDEMNKVIELGDVGPVRMCKRILKNQTASSGDIPFYKIGTFGKKPDAYISNELFQEYKQKYSYPKKGDILISASGTIGRTVIFDGENSYFQDSNIVWIDNDETLVLNKYLYHFYKIAKWGIAEGGTIQRLYNDNLKKVKISIPPLKEQHRIVSILDKFETLTNSITEGLPLAIEQSQKRYEYYRELLLNFS.

This sequence belongs to the type-I restriction system S methylase family.

Its function is as follows. A putative specificity subunit for a type I restriction enzyme; the corresponding endonuclease and methylase subunits have multiple frameshifts and are probably not expressed. This Haemophilus influenzae (strain ATCC 51907 / DSM 11121 / KW20 / Rd) protein is Putative type I restriction enzyme specificity subunit S.HindORF215P.